Consider the following 193-residue polypeptide: Thioredoxin reductase-like selenoprotein T1b (193 aa).

The first 21 residues, 1–21 (METRCLYLLLVCVLSVNHATA), serve as a signal peptide directing secretion. The segment at residues 44–47 (CVSU) is a cross-link (cysteinyl-selenocysteine (Cys-Sec)). Position 47 (selenocysteine 47) is a non-standard amino acid, selenocysteine.

This sequence belongs to the SelWTH family. Selenoprotein T subfamily. May contain a selenide-sulfide bond between Cys-44 and Sec-47. This bond is speculated to serve as redox-active pair. As to expression, widely expressed in the embryo. High level in embryonic blood at 24 hours post-fertilization (hpf).

The protein resides in the endoplasmic reticulum membrane. The enzyme catalyses [thioredoxin]-dithiol + NADP(+) = [thioredoxin]-disulfide + NADPH + H(+). In terms of biological role, selenoprotein with thioredoxin reductase-like oxidoreductase activity. The sequence is that of Thioredoxin reductase-like selenoprotein T1b from Danio rerio (Zebrafish).